The primary structure comprises 196 residues: Oplophorus-luciferin 2-monooxygenase catalytic subunit (196 aa).

Positions 1 to 27 are cleaved as a signal peptide; sequence MAYSTLFIIALTAVVTQASSTQKSNLT.

In terms of assembly, heterotetramer of a catalytic 19 kDa and a non-catalytic 35 kDa subunit.

It is found in the secreted. It carries out the reaction coelenterazine + O2 = coelenteramide + hnu + CO2. Its activity is regulated as follows. Inhibited by micromolar Cu(2+). Its function is as follows. Catalytic subunit of oplophorus-luciferin 2-monooxygenase. Oxidoreductase that converts coelenterazine (the oplophorus luciferin) to coelenteramide under emission of blue light with a maximum at 454 nm. Is also active with bisdeoxycoelenterazine. The protein is Oplophorus-luciferin 2-monooxygenase catalytic subunit of Oplophorus gracilirostris (Luminous shrimp).